We begin with the raw amino-acid sequence, 965 residues long: Isoleucine--tRNA ligase (965 aa).

Residues 68-78 carry the 'HIGH' region motif; sequence PYANGSLHMGH. Residue E582 coordinates L-isoleucyl-5'-AMP. The short motif at 623–627 is the 'KMSKS' region element; it reads KMSKS. K626 provides a ligand contact to ATP. Zn(2+)-binding residues include C936, C939, C956, and C959.

Belongs to the class-I aminoacyl-tRNA synthetase family. IleS type 1 subfamily. As to quaternary structure, monomer. It depends on Zn(2+) as a cofactor.

The protein resides in the cytoplasm. It catalyses the reaction tRNA(Ile) + L-isoleucine + ATP = L-isoleucyl-tRNA(Ile) + AMP + diphosphate. In terms of biological role, catalyzes the attachment of isoleucine to tRNA(Ile). As IleRS can inadvertently accommodate and process structurally similar amino acids such as valine, to avoid such errors it has two additional distinct tRNA(Ile)-dependent editing activities. One activity is designated as 'pretransfer' editing and involves the hydrolysis of activated Val-AMP. The other activity is designated 'posttransfer' editing and involves deacylation of mischarged Val-tRNA(Ile). The protein is Isoleucine--tRNA ligase of Prochlorococcus marinus subsp. pastoris (strain CCMP1986 / NIES-2087 / MED4).